The following is a 535-amino-acid chain: Beta-glucosidase 20 (535 aa).

A signal peptide spans methionine 1 to alanine 24. A beta-D-glucoside-binding residues include glutamine 56 and histidine 159. N-linked (GlcNAc...) asparagine glycosylation is present at asparagine 187. Asparagine 204–glutamate 205 serves as a coordination point for a beta-D-glucoside. Glutamate 205 functions as the Proton donor in the catalytic mechanism. A disulfide bridge connects residues cysteine 224 and cysteine 235. The a beta-D-glucoside site is built by tyrosine 351 and glutamate 424. Glutamate 424 serves as the catalytic Nucleophile. Asparagine 468 carries N-linked (GlcNAc...) asparagine glycosylation. Residues tryptophan 475, glutamate 482 to tryptophan 483, and phenylalanine 491 contribute to the a beta-D-glucoside site. Asparagine 501 carries an N-linked (GlcNAc...) asparagine glycan. Residues histidine 532–leucine 535 carry the Prevents secretion from ER motif.

It belongs to the glycosyl hydrolase 1 family.

The protein resides in the endoplasmic reticulum lumen. The enzyme catalyses Hydrolysis of terminal, non-reducing beta-D-glucosyl residues with release of beta-D-glucose.. This is Beta-glucosidase 20 from Arabidopsis thaliana (Mouse-ear cress).